The chain runs to 126 residues: Large ribosomal subunit protein bL12 (126 aa).

Belongs to the bacterial ribosomal protein bL12 family. As to quaternary structure, homodimer. Part of the ribosomal stalk of the 50S ribosomal subunit. Forms a multimeric L10(L12)X complex, where L10 forms an elongated spine to which 2 to 4 L12 dimers bind in a sequential fashion. Binds GTP-bound translation factors.

Its function is as follows. Forms part of the ribosomal stalk which helps the ribosome interact with GTP-bound translation factors. Is thus essential for accurate translation. The polypeptide is Large ribosomal subunit protein bL12 (Blochmanniella floridana).